The sequence spans 144 residues: NADH-ubiquinone oxidoreductase chain 6 (144 aa).

5 consecutive transmembrane segments (helical) span residues 1–21 (MLGS…INVD), 26–46 (SFFL…FLHV), 47–67 (WFSY…LVYF), 76–96 (VVTP…YPFF), and 108–128 (FYFS…IFFM).

Belongs to the complex I subunit 6 family.

It is found in the mitochondrion membrane. The enzyme catalyses a ubiquinone + NADH + 5 H(+)(in) = a ubiquinol + NAD(+) + 4 H(+)(out). Its function is as follows. Core subunit of the mitochondrial membrane respiratory chain NADH dehydrogenase (Complex I) that is believed to belong to the minimal assembly required for catalysis. Complex I functions in the transfer of electrons from NADH to the respiratory chain. The immediate electron acceptor for the enzyme is believed to be ubiquinone. This is NADH-ubiquinone oxidoreductase chain 6 (ND6) from Ascaris suum (Pig roundworm).